The following is a 703-amino-acid chain: MAKREYPLERTRNIGIMAHIDAGKTTTTERILYYTGKIHKIGETHDGASQMDFMEQEKERGITIQSAATTAVWHGFFDQFAKTPYRVNIIDTPGHVDFTIEVERALRVLDGAVAVLDGAAGVEPQTETVWRQATTYDVPRIVFVNKMDKLGADFQMSVDSIHERLQVNAEAIQWPIGAEDDFEAVIDLITQEAYYPEDDLGEKWAPREIPEELKELAEEKRNTLIEAVADVDDDLMEKYLEGEDISIEELKAAIRRATLALQFYPVLAGSAYKDKGVQMMLDAVVDYLPGPLDVKPYIANDPKTDEEIDLIADDSKPFAALAFKIMTDPFVGRLTFMRVYTGTLKSGSYVQNTSSDTRERVGRLLQMHATSRTEIEEVFSGDIAAAIGLKNTTTGDSLTDVSHQLILESMEFPEPVIELAIEPKTKADQDKLSNAIQKLAEEDPSFRATTNQETGQTLIAGMGELQLDIMVDRMRREFNVEATVGAPQVAYREAFTKTVQARGFFKRQSGGKGQYGDVYIEFAPNEEGAGFEFEDAIVGGVVPREYIPSVEAGLKDALNAGPLAGFPLVDLKAKLYDGSYHDVDSSEAAFKIAASLALKEAAKTAGAVILEPIMAVDIVAPEDNLGDVMGHVSARRGMIEGQESRGPVLAVKAKVPLSEMFGYATTLRSATQGRGTFQMVFDHYEAVPKNIQEEIIKTNGQED.

Residues 9–292 form the tr-type G domain; the sequence is ERTRNIGIMA…AVVDYLPGPL (284 aa). Residues 18-25, 91-95, and 145-148 each bind GTP; these read AHIDAGKT, DTPGH, and NKMD.

The protein belongs to the TRAFAC class translation factor GTPase superfamily. Classic translation factor GTPase family. EF-G/EF-2 subfamily.

It is found in the cytoplasm. Catalyzes the GTP-dependent ribosomal translocation step during translation elongation. During this step, the ribosome changes from the pre-translocational (PRE) to the post-translocational (POST) state as the newly formed A-site-bound peptidyl-tRNA and P-site-bound deacylated tRNA move to the P and E sites, respectively. Catalyzes the coordinated movement of the two tRNA molecules, the mRNA and conformational changes in the ribosome. This chain is Elongation factor G, found in Leuconostoc mesenteroides subsp. mesenteroides (strain ATCC 8293 / DSM 20343 / BCRC 11652 / CCM 1803 / JCM 6124 / NCDO 523 / NBRC 100496 / NCIMB 8023 / NCTC 12954 / NRRL B-1118 / 37Y).